The following is a 232-amino-acid chain: Thrombin-like enzyme bothrombin (232 aa).

In terms of domain architecture, Peptidase S1 spans 1 to 223 (VIGGDECDIN…YLPWIQSIIA (223 aa)). 6 cysteine pairs are disulfide-bonded: cysteine 7–cysteine 139, cysteine 26–cysteine 42, cysteine 74–cysteine 230, cysteine 118–cysteine 184, cysteine 150–cysteine 163, and cysteine 174–cysteine 199. Residues histidine 41 and aspartate 86 each act as charge relay system in the active site. 2 N-linked (GlcNAc...) asparagine glycosylation sites follow: asparagine 98 and asparagine 146. The active-site Charge relay system is serine 178. An N-linked (GlcNAc...) asparagine glycan is attached at asparagine 225.

Belongs to the peptidase S1 family. Snake venom subfamily. In terms of assembly, monomer. Expressed by the venom gland.

Its subcellular location is the secreted. It catalyses the reaction Selective cleavage of Arg-|-Xaa bond in fibrinogen, to form fibrin, and release fibrinopeptide A. The specificity of further degradation of fibrinogen varies with species origin of the enzyme.. With respect to regulation, inhibited by diisopropylfluorophosphate (DFP), but not by hirudin. In terms of biological role, thrombin-like snake venom serine protease that clots fibrinogen by releasing fibrinopeptide A from the alpha chain of fibrinogen (FGA), induces platelet aggregation through its interaction with GPIb (GP1BA/GP1BB), and activates factor VIII (F8). This is Thrombin-like enzyme bothrombin from Bothrops jararaca (Jararaca).